Here is a 388-residue protein sequence, read N- to C-terminus: 4-hydroxy-3-methylbut-2-en-1-yl diphosphate synthase (flavodoxin) (388 aa).

Residues 1-22 are disordered; sequence MTSVNLGMPAAPQPVLSPRRKT. [4Fe-4S] cluster is bound by residues C281, C284, C316, and E323.

It belongs to the IspG family. [4Fe-4S] cluster serves as cofactor.

It catalyses the reaction (2E)-4-hydroxy-3-methylbut-2-enyl diphosphate + oxidized [flavodoxin] + H2O + 2 H(+) = 2-C-methyl-D-erythritol 2,4-cyclic diphosphate + reduced [flavodoxin]. It functions in the pathway isoprenoid biosynthesis; isopentenyl diphosphate biosynthesis via DXP pathway; isopentenyl diphosphate from 1-deoxy-D-xylulose 5-phosphate: step 5/6. Functionally, converts 2C-methyl-D-erythritol 2,4-cyclodiphosphate (ME-2,4cPP) into 1-hydroxy-2-methyl-2-(E)-butenyl 4-diphosphate. This chain is 4-hydroxy-3-methylbut-2-en-1-yl diphosphate synthase (flavodoxin), found in Kocuria rhizophila (strain ATCC 9341 / DSM 348 / NBRC 103217 / DC2201).